The sequence spans 266 residues: Small ribosomal subunit protein eS1 (266 aa).

A disordered region spans residues 233 to 266; the sequence is GEGGGSSAAKPSGDDTGAKVDRADGYEPPIQETV. Over residues 244–257 the composition is skewed to basic and acidic residues; it reads SGDDTGAKVDRADG.

It belongs to the eukaryotic ribosomal protein eS1 family. Component of the small ribosomal subunit. Mature ribosomes consist of a small (40S) and a large (60S) subunit. The 40S subunit contains about 33 different proteins and 1 molecule of RNA (18S). The 60S subunit contains about 49 different proteins and 3 molecules of RNA (28S, 5.8S and 5S). Part of the small subunit (SSU) processome, composed of more than 70 proteins and the RNA chaperone small nucleolar RNA (snoRNA) U3.

The protein localises to the cytoplasm. Its subcellular location is the nucleus. It is found in the nucleolus. In terms of biological role, component of the small ribosomal subunit. The ribosome is a large ribonucleoprotein complex responsible for the synthesis of proteins in the cell. Part of the small subunit (SSU) processome, first precursor of the small eukaryotic ribosomal subunit. During the assembly of the SSU processome in the nucleolus, many ribosome biogenesis factors, an RNA chaperone and ribosomal proteins associate with the nascent pre-rRNA and work in concert to generate RNA folding, modifications, rearrangements and cleavage as well as targeted degradation of pre-ribosomal RNA by the RNA exosome. May play a role during erythropoiesis. This is Small ribosomal subunit protein eS1 (rps3a) from Salmo salar (Atlantic salmon).